The sequence spans 216 residues: Cyclin-U4-2 (216 aa).

Belongs to the cyclin family. Cyclin U/P subfamily. Interacts with CDKA-1. As to expression, expressed in roots, stems and flowers. Expressed in the shoot apex, leaf primordia and young leaves.

The sequence is that of Cyclin-U4-2 (CYCU4-2) from Arabidopsis thaliana (Mouse-ear cress).